A 119-amino-acid chain; its full sequence is Large ribosomal subunit protein uL22 (119 aa).

This sequence belongs to the universal ribosomal protein uL22 family. As to quaternary structure, part of the 50S ribosomal subunit.

Functionally, this protein binds specifically to 23S rRNA; its binding is stimulated by other ribosomal proteins, e.g. L4, L17, and L20. It is important during the early stages of 50S assembly. It makes multiple contacts with different domains of the 23S rRNA in the assembled 50S subunit and ribosome. Its function is as follows. The globular domain of the protein is located near the polypeptide exit tunnel on the outside of the subunit, while an extended beta-hairpin is found that lines the wall of the exit tunnel in the center of the 70S ribosome. This Rickettsia peacockii (strain Rustic) protein is Large ribosomal subunit protein uL22.